A 292-amino-acid chain; its full sequence is Xyloglucan endotransglucosylase/hydrolase protein A (292 aa).

Residues 1–20 (MGSSLWTCLILLSLASASFA) form the signal peptide. Positions 21–219 (ANPRTPIDVP…WSKAPFIASY (199 aa)) constitute a GH16 domain. Glutamate 105 (nucleophile) is an active-site residue. Glutamate 109 serves as the catalytic Proton donor. Glutamate 109 is a xyloglucan binding site. Asparagine 113 carries N-linked (GlcNAc...) asparagine glycosylation. Xyloglucan is bound by residues 122–124 (QTN), 132–134 (DRE), 198–199 (DW), and glycine 203. 2 cysteine pairs are disulfide-bonded: cysteine 227–cysteine 236 and cysteine 273–cysteine 286. Xyloglucan is bound at residue arginine 278.

It belongs to the glycosyl hydrolase 16 family. XTH group 1 subfamily. Contains at least one intrachain disulfide bond essential for its enzymatic activity. As to expression, predominantly expressed in the phloem fibers of growing internodes. Expressed in xylem cells in the basal part of the internode. In the internode, it is expressed closer to the top of the internode compared to XTHB.

The protein localises to the secreted. It localises to the cell wall. It is found in the extracellular space. The protein resides in the apoplast. It carries out the reaction breaks a beta-(1-&gt;4) bond in the backbone of a xyloglucan and transfers the xyloglucanyl segment on to O-4 of the non-reducing terminal glucose residue of an acceptor, which can be a xyloglucan or an oligosaccharide of xyloglucan.. Functionally, catalyzes xyloglucan endohydrolysis (XEH) and/or endotransglycosylation (XET). Cleaves and religates xyloglucan polymers, an essential constituent of the primary cell wall, and thereby participates in cell wall construction of growing tissues. In Phaseolus angularis (Azuki bean), this protein is Xyloglucan endotransglucosylase/hydrolase protein A (XTHA).